The following is a 156-amino-acid chain: Small ribosomal subunit protein uS7 (156 aa).

Belongs to the universal ribosomal protein uS7 family. As to quaternary structure, part of the 30S ribosomal subunit. Contacts proteins S9 and S11.

One of the primary rRNA binding proteins, it binds directly to 16S rRNA where it nucleates assembly of the head domain of the 30S subunit. Is located at the subunit interface close to the decoding center, probably blocks exit of the E-site tRNA. The sequence is that of Small ribosomal subunit protein uS7 from Clavibacter sepedonicus (Clavibacter michiganensis subsp. sepedonicus).